The following is a 417-amino-acid chain: MFRRLLIATLIGILAALAVAAFRHAMQLLEWIFLSNDTGSLVNAAEGLSPWRRLITPALGGLAAGLLLWGWQKMNQQRPHAPTDYMEALQTDGQFDVGASLVKSLASLLVVVSGSAIGREGAMILLAALAASSFARRFTPREEWKLWIASGAAAGMAGAYHAPLAGSLFIAEILFGTLMLASLGPVVVSAVVALLTTHVLNGSDSLLYTVHLTVDLYAREYVMIVSTGLVAGLWGPLLMWLMTASHNSFLRLKLSPPWQLALGGLIVGLLSLLTPTVWGNGYSVVQSFLLSPPLFSLIGGIFACKILAVLASSGSGAPGGVFTPTLFVGLSIGMFLGRIWGFWLPGSDEIAILLGLAGMATLLAATTHAPIMSTLMICEMTGEYQLLPGLLIACVVASVLSRTLRHDSIYRQHAAEH.

At 1–4 (MFRR) the chain is on the cytoplasmic side. Residues 5–25 (LLIATLIGILAALAVAAFRHA) form a helical membrane-spanning segment. At 26 to 53 (MQLLEWIFLSNDTGSLVNAAEGLSPWRR) the chain is on the periplasmic side. The helical transmembrane segment at 54–74 (LITPALGGLAAGLLLWGWQKM) threads the bilayer. Residues 75 to 145 (NQQRPHAPTD…RRFTPREEWK (71 aa)) are Cytoplasmic-facing. A helical membrane pass occupies residues 146 to 166 (LWIASGAAAGMAGAYHAPLAG). Over 167 to 172 (SLFIAE) the chain is Periplasmic. The chain crosses the membrane as a helical span at residues 173–195 (ILFGTLMLASLGPVVVSAVVALL). Residues 196–221 (TTHVLNGSDSLLYTVHLTVDLYAREY) are Cytoplasmic-facing. A helical membrane pass occupies residues 222-242 (VMIVSTGLVAGLWGPLLMWLM). Topologically, residues 243-257 (TASHNSFLRLKLSPP) are periplasmic. The chain crosses the membrane as a helical span at residues 258 to 278 (WQLALGGLIVGLLSLLTPTVW). At 279-287 (GNGYSVVQS) the chain is on the cytoplasmic side. A helical membrane pass occupies residues 288–308 (FLLSPPLFSLIGGIFACKILA). The Periplasmic portion of the chain corresponds to 309-315 (VLASSGS). A helical membrane pass occupies residues 316 to 336 (GAPGGVFTPTLFVGLSIGMFL). Over 337 to 338 (GR) the chain is Cytoplasmic. The chain crosses the membrane as a helical span at residues 339–359 (IWGFWLPGSDEIAILLGLAGM). Residues 360–379 (ATLLAATTHAPIMSTLMICE) are Periplasmic-facing. Residues 380-400 (MTGEYQLLPGLLIACVVASVL) form a helical membrane-spanning segment. Residues 401-417 (SRTLRHDSIYRQHAAEH) are Cytoplasmic-facing.

This sequence belongs to the chloride channel (TC 2.A.49) family. ClcB subfamily.

The protein localises to the cell inner membrane. Functionally, probably acts as an electrical shunt for an outwardly-directed proton pump that is linked to amino acid decarboxylation, as part of the extreme acid resistance (XAR) response. The sequence is that of Voltage-gated ClC-type chloride channel ClcB (clcB) from Salmonella typhi.